Here is a 149-residue protein sequence, read N- to C-terminus: Nucleoside diphosphate kinase (149 aa).

Residues Lys-9, Phe-57, Arg-85, Thr-91, Arg-102, and Asn-112 each contribute to the ATP site. The active-site Pros-phosphohistidine intermediate is His-115.

Belongs to the NDK family. Mg(2+) serves as cofactor.

Its subcellular location is the cytoplasm. The catalysed reaction is a 2'-deoxyribonucleoside 5'-diphosphate + ATP = a 2'-deoxyribonucleoside 5'-triphosphate + ADP. The enzyme catalyses a ribonucleoside 5'-diphosphate + ATP = a ribonucleoside 5'-triphosphate + ADP. Major role in the synthesis of nucleoside triphosphates other than ATP. The ATP gamma phosphate is transferred to the NDP beta phosphate via a ping-pong mechanism, using a phosphorylated active-site intermediate. This is Nucleoside diphosphate kinase from Methanosarcina mazei (strain ATCC BAA-159 / DSM 3647 / Goe1 / Go1 / JCM 11833 / OCM 88) (Methanosarcina frisia).